Consider the following 242-residue polypeptide: 3-deoxy-manno-octulosonate cytidylyltransferase (242 aa).

Belongs to the KdsB family.

The protein localises to the cytoplasm. It carries out the reaction 3-deoxy-alpha-D-manno-oct-2-ulosonate + CTP = CMP-3-deoxy-beta-D-manno-octulosonate + diphosphate. Its pathway is nucleotide-sugar biosynthesis; CMP-3-deoxy-D-manno-octulosonate biosynthesis; CMP-3-deoxy-D-manno-octulosonate from 3-deoxy-D-manno-octulosonate and CTP: step 1/1. It functions in the pathway bacterial outer membrane biogenesis; lipopolysaccharide biosynthesis. Its function is as follows. Activates KDO (a required 8-carbon sugar) for incorporation into bacterial lipopolysaccharide in Gram-negative bacteria. This is 3-deoxy-manno-octulosonate cytidylyltransferase from Anaeromyxobacter dehalogenans (strain 2CP-1 / ATCC BAA-258).